The sequence spans 117 residues: Large ribosomal subunit protein bL20c (117 aa).

The protein belongs to the bacterial ribosomal protein bL20 family.

The protein resides in the plastid. The protein localises to the chloroplast. In terms of biological role, binds directly to 23S ribosomal RNA and is necessary for the in vitro assembly process of the 50S ribosomal subunit. It is not involved in the protein synthesizing functions of that subunit. This Morus indica (Mulberry) protein is Large ribosomal subunit protein bL20c.